The sequence spans 293 residues: Aspartate carbamoyltransferase catalytic subunit (293 aa).

R50 and T51 together coordinate carbamoyl phosphate. K78 is a binding site for L-aspartate. Residues R100, H127, and Q130 each coordinate carbamoyl phosphate. L-aspartate is bound by residues R160 and R210. The carbamoyl phosphate site is built by A253 and P254.

It belongs to the aspartate/ornithine carbamoyltransferase superfamily. ATCase family. In terms of assembly, heterododecamer (2C3:3R2) of six catalytic PyrB chains organized as two trimers (C3), and six regulatory PyrI chains organized as three dimers (R2).

It catalyses the reaction carbamoyl phosphate + L-aspartate = N-carbamoyl-L-aspartate + phosphate + H(+). It participates in pyrimidine metabolism; UMP biosynthesis via de novo pathway; (S)-dihydroorotate from bicarbonate: step 2/3. In terms of biological role, catalyzes the condensation of carbamoyl phosphate and aspartate to form carbamoyl aspartate and inorganic phosphate, the committed step in the de novo pyrimidine nucleotide biosynthesis pathway. This is Aspartate carbamoyltransferase catalytic subunit from Staphylococcus epidermidis (strain ATCC 35984 / DSM 28319 / BCRC 17069 / CCUG 31568 / BM 3577 / RP62A).